A 128-amino-acid polypeptide reads, in one-letter code: Azurin (128 aa).

Positions 1–128 (AECKVDVDST…SMMKGAVVLK (128 aa)) constitute a Plastocyanin-like domain. A disulfide bond links cysteine 3 and cysteine 26. Cu cation-binding residues include histidine 46, cysteine 112, histidine 117, and methionine 121.

It is found in the periplasm. In terms of biological role, transfers electrons from cytochrome c551 to cytochrome oxidase. The sequence is that of Azurin from Pseudomonas chlororaphis (Pseudomonas aureofaciens).